The chain runs to 285 residues: Bifunctional protein FolD (285 aa).

NADP(+) contacts are provided by residues 165 to 167 (GAS) and S190.

Belongs to the tetrahydrofolate dehydrogenase/cyclohydrolase family. In terms of assembly, homodimer.

The catalysed reaction is (6R)-5,10-methylene-5,6,7,8-tetrahydrofolate + NADP(+) = (6R)-5,10-methenyltetrahydrofolate + NADPH. The enzyme catalyses (6R)-5,10-methenyltetrahydrofolate + H2O = (6R)-10-formyltetrahydrofolate + H(+). It participates in one-carbon metabolism; tetrahydrofolate interconversion. Its function is as follows. Catalyzes the oxidation of 5,10-methylenetetrahydrofolate to 5,10-methenyltetrahydrofolate and then the hydrolysis of 5,10-methenyltetrahydrofolate to 10-formyltetrahydrofolate. The sequence is that of Bifunctional protein FolD from Cupriavidus metallidurans (strain ATCC 43123 / DSM 2839 / NBRC 102507 / CH34) (Ralstonia metallidurans).